A 230-amino-acid polypeptide reads, in one-letter code: MYTNMGYLTSSFIFFFLALVTYTYAATIEVRNNCPYTVWAASTPIGGGRRLDRGQTWVINAPRGTKMARIWGRTNCNFNGAGRGSCQTGDCGGVLHCTGWGKPPNTLAEYALDQFSNLDFWDISLVDGFNIPMTFAPTNPSGGKCHAIHCTANINGECPSPLRVPGGCNNPCTTFGGQQYCCTQGPCGPTKFSRFFKQRCPNAYSYPQDDPTSLFTCPSGSTNYRVVFCP.

The N-terminal stretch at 1-25 is a signal peptide; the sequence is MYTNMGYLTSSFIFFFLALVTYTYA. Cystine bridges form between Cys-34-Cys-229, Cys-76-Cys-86, Cys-91-Cys-97, Cys-145-Cys-217, Cys-150-Cys-200, Cys-158-Cys-168, Cys-172-Cys-181, and Cys-182-Cys-187.

It belongs to the thaumatin family.

The protein resides in the secreted. The protein localises to the vacuole. It catalyses the reaction Endohydrolysis of (1-&gt;3)- or (1-&gt;4)-linkages in beta-D-glucans when the glucose residue whose reducing group is involved in the linkage to be hydrolyzed is itself substituted at C-3.. Functionally, antifungal protein. May bind to beta-glucans and have beta-1,3-D-glucanase activity. In Solanum lycopersicum (Tomato), this protein is Osmotin-like protein PR-5x.